A 187-amino-acid polypeptide reads, in one-letter code: Orotate phosphoribosyltransferase (187 aa).

5-phospho-alpha-D-ribose 1-diphosphate contacts are provided by residues Arg98, Lys99, Lys102, His104, and 128 to 136 (EDVTTTGGS). Orotate-binding residues include Thr132 and Arg160.

The protein belongs to the purine/pyrimidine phosphoribosyltransferase family. PyrE subfamily. Homodimer. Mg(2+) serves as cofactor.

It catalyses the reaction orotidine 5'-phosphate + diphosphate = orotate + 5-phospho-alpha-D-ribose 1-diphosphate. It functions in the pathway pyrimidine metabolism; UMP biosynthesis via de novo pathway; UMP from orotate: step 1/2. Functionally, catalyzes the transfer of a ribosyl phosphate group from 5-phosphoribose 1-diphosphate to orotate, leading to the formation of orotidine monophosphate (OMP). The sequence is that of Orotate phosphoribosyltransferase from Rhodopseudomonas palustris (strain TIE-1).